A 662-amino-acid chain; its full sequence is Bifunctional polymyxin resistance protein ArnA (662 aa).

Positions 1–307 are formyltransferase ArnAFT; the sequence is MTSKAVVFAY…ELGLVEGARL (307 aa). Catalysis depends on histidine 106, which acts as the Proton donor; for formyltransferase activity. (6R)-10-formyltetrahydrofolate is bound by residues arginine 116 and 138–142; that span reads VERAD. The tract at residues 316 to 662 is dehydrogenase ArnADH; that stretch reads RRTRVLILGV…EALREREAQA (347 aa). Residues aspartate 349 and 370–371 contribute to the NAD(+) site; that span reads DI. UDP-alpha-D-glucuronate contacts are provided by residues alanine 395, tyrosine 400, and 434-435; that span reads TS. The Proton acceptor; for decarboxylase activity role is filled by glutamate 436. UDP-alpha-D-glucuronate is bound by residues arginine 462, asparagine 493, 527–536, and tyrosine 614; that span reads RLVDGGAQKR. Arginine 620 functions as the Proton donor; for decarboxylase activity in the catalytic mechanism.

This sequence in the N-terminal section; belongs to the Fmt family. UDP-L-Ara4N formyltransferase subfamily. It in the C-terminal section; belongs to the NAD(P)-dependent epimerase/dehydratase family. UDP-glucuronic acid decarboxylase subfamily. As to quaternary structure, homohexamer, formed by a dimer of trimers.

It catalyses the reaction UDP-alpha-D-glucuronate + NAD(+) = UDP-beta-L-threo-pentopyranos-4-ulose + CO2 + NADH. The enzyme catalyses UDP-4-amino-4-deoxy-beta-L-arabinose + (6R)-10-formyltetrahydrofolate = UDP-4-deoxy-4-formamido-beta-L-arabinose + (6S)-5,6,7,8-tetrahydrofolate + H(+). It functions in the pathway nucleotide-sugar biosynthesis; UDP-4-deoxy-4-formamido-beta-L-arabinose biosynthesis; UDP-4-deoxy-4-formamido-beta-L-arabinose from UDP-alpha-D-glucuronate: step 1/3. It participates in nucleotide-sugar biosynthesis; UDP-4-deoxy-4-formamido-beta-L-arabinose biosynthesis; UDP-4-deoxy-4-formamido-beta-L-arabinose from UDP-alpha-D-glucuronate: step 3/3. The protein operates within bacterial outer membrane biogenesis; lipopolysaccharide biosynthesis. Its function is as follows. Bifunctional enzyme that catalyzes the oxidative decarboxylation of UDP-glucuronic acid (UDP-GlcUA) to UDP-4-keto-arabinose (UDP-Ara4O) and the addition of a formyl group to UDP-4-amino-4-deoxy-L-arabinose (UDP-L-Ara4N) to form UDP-L-4-formamido-arabinose (UDP-L-Ara4FN). The modified arabinose is attached to lipid A and is required for resistance to polymyxin and cationic antimicrobial peptides. The protein is Bifunctional polymyxin resistance protein ArnA of Pseudomonas paraeruginosa (strain DSM 24068 / PA7) (Pseudomonas aeruginosa (strain PA7)).